Consider the following 416-residue polypeptide: Serine/threonine transporter SstT (416 aa).

The next 9 membrane-spanning stretches (helical) occupy residues 15–35, 49–69, 82–102, 141–161, 192–212, 217–237, 288–308, 316–336, and 363–383; these read SLVS…MFMP, VGAL…AAII, ILLL…VASF, ALLD…GIAM, LGIL…ALFG, LVVL…LIVF, VSIP…ITVL, LGME…TISA, and IAMQ…SAET.

It belongs to the dicarboxylate/amino acid:cation symporter (DAACS) (TC 2.A.23) family.

Its subcellular location is the cell inner membrane. It catalyses the reaction L-serine(in) + Na(+)(in) = L-serine(out) + Na(+)(out). The enzyme catalyses L-threonine(in) + Na(+)(in) = L-threonine(out) + Na(+)(out). Involved in the import of serine and threonine into the cell, with the concomitant import of sodium (symport system). The protein is Serine/threonine transporter SstT of Aeromonas hydrophila subsp. hydrophila (strain ATCC 7966 / DSM 30187 / BCRC 13018 / CCUG 14551 / JCM 1027 / KCTC 2358 / NCIMB 9240 / NCTC 8049).